The chain runs to 707 residues: Lipase maturation factor 2 (707 aa).

Transmembrane regions (helical) follow at residues 10-30, 78-98, 102-122, 123-143, 165-185, 227-247, 259-279, 310-330, 364-384, and 399-419; these read LFLQ…YTQI, LELL…LSPL, VIYL…QVFL, YFQW…VAPL, DLPF…SGVV, LSVV…FAPI, VLLQ…LMTL, ALLA…LAYG, LTLP…LSAL, and AVVQ…ISLV. Asn489 and Asn616 each carry an N-linked (GlcNAc...) asparagine glycan. A helical transmembrane segment spans residues 637 to 657; sequence ALLWGLLMAVGAVRFVQALLA. The segment at 665–707 is disordered; that stretch reads PLAPVSGEKRRPASQKDSGAASEQATAAPNPCSSSSRTTRRKK. Positions 679-691 are enriched in polar residues; the sequence is QKDSGAASEQATA.

It belongs to the lipase maturation factor family.

The protein localises to the endoplasmic reticulum membrane. Functionally, involved in the maturation of specific proteins in the endoplasmic reticulum. May be required for maturation and transport of active lipoprotein lipase (LPL) through the secretory pathway. The polypeptide is Lipase maturation factor 2 (LMF2) (Homo sapiens (Human)).